The following is a 787-amino-acid chain: Penicillin-binding protein 1A (787 aa).

The Cytoplasmic segment spans residues 1–6; it reads MYKSLF. Residues 7-27 traverse the membrane as a helical; Signal-anchor for type II membrane protein segment; the sequence is LCLKIFAVLILIGCSVTAYII. At 28-787 the chain is on the periplasmic side; it reads YHYSHDLPDY…GMLDQSQEIY (760 aa). Positions 49-220 are transglycosylase; that stretch reads TRIYSRDGKL…SELNPDKNYS (172 aa). The active-site Proton donor; for transglycosylase activity is the glutamate 87. A transpeptidase region spans residues 398–711; sequence DVIVVEPIKD…SNVVLPIFID (314 aa). Residue serine 457 is the Acyl-ester intermediate; for transpeptidase activity of the active site.

In the N-terminal section; belongs to the glycosyltransferase 51 family. This sequence in the C-terminal section; belongs to the transpeptidase family.

Its subcellular location is the cell inner membrane. The enzyme catalyses [GlcNAc-(1-&gt;4)-Mur2Ac(oyl-L-Ala-gamma-D-Glu-L-Lys-D-Ala-D-Ala)](n)-di-trans,octa-cis-undecaprenyl diphosphate + beta-D-GlcNAc-(1-&gt;4)-Mur2Ac(oyl-L-Ala-gamma-D-Glu-L-Lys-D-Ala-D-Ala)-di-trans,octa-cis-undecaprenyl diphosphate = [GlcNAc-(1-&gt;4)-Mur2Ac(oyl-L-Ala-gamma-D-Glu-L-Lys-D-Ala-D-Ala)](n+1)-di-trans,octa-cis-undecaprenyl diphosphate + di-trans,octa-cis-undecaprenyl diphosphate + H(+). It carries out the reaction Preferential cleavage: (Ac)2-L-Lys-D-Ala-|-D-Ala. Also transpeptidation of peptidyl-alanyl moieties that are N-acyl substituents of D-alanine.. It functions in the pathway cell wall biogenesis; peptidoglycan biosynthesis. Cell wall formation. Synthesis of cross-linked peptidoglycan from the lipid intermediates. The enzyme has a penicillin-insensitive transglycosylase N-terminal domain (formation of linear glycan strands) and a penicillin-sensitive transpeptidase C-terminal domain (cross-linking of the peptide subunits). The sequence is that of Penicillin-binding protein 1A (mrcA) from Rickettsia prowazekii (strain Madrid E).